The following is a 127-amino-acid chain: Holo-[acyl-carrier-protein] synthase (127 aa).

2 residues coordinate Mg(2+): Asp8 and Glu57.

This sequence belongs to the P-Pant transferase superfamily. AcpS family. Mg(2+) is required as a cofactor.

It is found in the cytoplasm. It carries out the reaction apo-[ACP] + CoA = holo-[ACP] + adenosine 3',5'-bisphosphate + H(+). In terms of biological role, transfers the 4'-phosphopantetheine moiety from coenzyme A to a Ser of acyl-carrier-protein. The polypeptide is Holo-[acyl-carrier-protein] synthase (Vesicomyosocius okutanii subsp. Calyptogena okutanii (strain HA)).